Consider the following 78-residue polypeptide: MSNKGQTLQDPFLNTLRKEHVPVSIYLVNGIKLQGQIESFDQYVVLLRNTVTQMVYKHAISTVVPARAVSFQVEVPAE.

The region spanning 10 to 69 is the Sm domain; sequence DPFLNTLRKEHVPVSIYLVNGIKLQGQIESFDQYVVLLRNTVTQMVYKHAISTVVPARAV.

It belongs to the Hfq family. As to quaternary structure, homohexamer.

Its function is as follows. RNA chaperone that binds small regulatory RNA (sRNAs) and mRNAs to facilitate mRNA translational regulation in response to envelope stress, environmental stress and changes in metabolite concentrations. Also binds with high specificity to tRNAs. This is RNA-binding protein Hfq from Bordetella avium (strain 197N).